The chain runs to 59 residues: Large ribosomal subunit protein uL30 (59 aa).

Belongs to the universal ribosomal protein uL30 family. In terms of assembly, part of the 50S ribosomal subunit.

The sequence is that of Large ribosomal subunit protein uL30 from Haemophilus influenzae (strain 86-028NP).